Here is a 424-residue protein sequence, read N- to C-terminus: Bone morphogenetic protein 10 (424 aa).

Positions 1-21 (MGSLVLTLCALFCLAAYLVSG) are cleaved as a signal peptide. Residues 22–316 (SPIMNLEQSP…IYDSTARIRR (295 aa)) constitute a propeptide that is removed on maturation. N-linked (GlcNAc...) asparagine glycosylation is found at Asn67 and Asn131. 3 cysteine pairs are disulfide-bonded: Cys323–Cys389, Cys352–Cys421, and Cys356–Cys423.

Belongs to the TGF-beta family. As to quaternary structure, homodimer; disulfide-linked. Interacts with FBN1 (via N-terminal domain) and FBN2. Interacts with ENG. Detected in mammary epithelia (at protein level).

It localises to the secreted. Its function is as follows. Required for maintaining the proliferative activity of embryonic cardiomyocytes by preventing premature activation of the negative cell cycle regulator CDKN1C/p57KIP and maintaining the required expression levels of cardiogenic factors such as MEF2C and NKX2-5. Acts as a ligand for ACVRL1/ALK1, BMPR1A/ALK3 and BMPR1B/ALK6, leading to activation of SMAD1, SMAD5 and SMAD8 transcription factors. Inhibits endothelial cell migration and growth. May reduce cell migration and cell matrix adhesion in breast cancer cell lines. This is Bone morphogenetic protein 10 (BMP10) from Homo sapiens (Human).